The primary structure comprises 147 residues: uncharacterized protein (147 aa).

The ABM domain maps to 50–138 (IVVAGNIKVK…LLAKPAEIKI (89 aa)).

The protein belongs to the LsrG family.

This is an uncharacterized protein from Synechocystis sp. (strain ATCC 27184 / PCC 6803 / Kazusa).